Consider the following 391-residue polypeptide: Glutamate 5-kinase (391 aa).

Lys-17 serves as a coordination point for ATP. Ser-57, Asp-144, and Asn-156 together coordinate substrate. ATP is bound by residues 176–177 and 216–222; these read SD and TGGMTTK. The 79-residue stretch at 278–356 folds into the PUA domain; it reads QGQIVIDDGA…AWLAAEMGPA (79 aa). Positions 370-391 are disordered; the sequence is SRRRKAEPSSRNQKSSGSRVTS. Residues 378-391 are compositionally biased toward polar residues; sequence SSRNQKSSGSRVTS.

This sequence belongs to the glutamate 5-kinase family.

The protein resides in the cytoplasm. It carries out the reaction L-glutamate + ATP = L-glutamyl 5-phosphate + ADP. It participates in amino-acid biosynthesis; L-proline biosynthesis; L-glutamate 5-semialdehyde from L-glutamate: step 1/2. Functionally, catalyzes the transfer of a phosphate group to glutamate to form L-glutamate 5-phosphate. The protein is Glutamate 5-kinase of Cutibacterium acnes (strain DSM 16379 / KPA171202) (Propionibacterium acnes).